The primary structure comprises 347 residues: MIPATCTLSQITARLGGEWRGEDISVTAVRPLADAQAEHISFLANPKYKAEVHDSSAGAIIVSAKAADGFEGRNLIVADDPYLYFAKVARLFSPVVKARGGIHPTAVVEPGATVPASCEIGANAYIGANTVLGEGCRILANAVVQHDCKLGDEVVLHPNAVVYYGCTLGRHVEIHSGAVIGADGFGLAFAGDSWFKIPQTGAVTLGDDVEIGSNTNIDRGAMSDTIVGNGTKIDNQVQIGHNCKIGSHTVIAAKTGISGSVTIGSYCIIGGGVGTVGHIEIADKTTIGGGTSVTHSITESGKHIAGIFPMSTHKEWARNAVYIHRLSEMNKRLKTLEQQLSDSKDTQ.

The Proton acceptor role is filled by H241.

Belongs to the transferase hexapeptide repeat family. LpxD subfamily. In terms of assembly, homotrimer.

It catalyses the reaction a UDP-3-O-[(3R)-3-hydroxyacyl]-alpha-D-glucosamine + a (3R)-hydroxyacyl-[ACP] = a UDP-2-N,3-O-bis[(3R)-3-hydroxyacyl]-alpha-D-glucosamine + holo-[ACP] + H(+). Its pathway is bacterial outer membrane biogenesis; LPS lipid A biosynthesis. Catalyzes the N-acylation of UDP-3-O-acylglucosamine using 3-hydroxyacyl-ACP as the acyl donor. Is involved in the biosynthesis of lipid A, a phosphorylated glycolipid that anchors the lipopolysaccharide to the outer membrane of the cell. In Neisseria gonorrhoeae (strain NCCP11945), this protein is UDP-3-O-acylglucosamine N-acyltransferase.